A 141-amino-acid chain; its full sequence is ATP synthase epsilon chain (141 aa).

The protein belongs to the ATPase epsilon chain family. In terms of assembly, F-type ATPases have 2 components, CF(1) - the catalytic core - and CF(0) - the membrane proton channel. CF(1) has five subunits: alpha(3), beta(3), gamma(1), delta(1), epsilon(1). CF(0) has three main subunits: a, b and c.

It localises to the cell inner membrane. In terms of biological role, produces ATP from ADP in the presence of a proton gradient across the membrane. This Burkholderia ambifaria (strain ATCC BAA-244 / DSM 16087 / CCUG 44356 / LMG 19182 / AMMD) (Burkholderia cepacia (strain AMMD)) protein is ATP synthase epsilon chain.